A 457-amino-acid polypeptide reads, in one-letter code: Siroheme synthase (457 aa).

Residues methionine 1 to threonine 204 are precorrin-2 dehydrogenase /sirohydrochlorin ferrochelatase. NAD(+) contacts are provided by residues aspartate 22–valine 23 and leucine 43–alanine 44. The residue at position 128 (serine 128) is a Phosphoserine. Residues glycine 216–histidine 457 form a uroporphyrinogen-III C-methyltransferase region. Proline 225 contacts S-adenosyl-L-methionine. The Proton acceptor role is filled by aspartate 248. Residue lysine 270 is the Proton donor of the active site. S-adenosyl-L-methionine contacts are provided by residues glycine 301–aspartate 303, isoleucine 306, threonine 331–alanine 332, methionine 382, and glycine 411.

In the N-terminal section; belongs to the precorrin-2 dehydrogenase / sirohydrochlorin ferrochelatase family. This sequence in the C-terminal section; belongs to the precorrin methyltransferase family.

It carries out the reaction uroporphyrinogen III + 2 S-adenosyl-L-methionine = precorrin-2 + 2 S-adenosyl-L-homocysteine + H(+). It catalyses the reaction precorrin-2 + NAD(+) = sirohydrochlorin + NADH + 2 H(+). The catalysed reaction is siroheme + 2 H(+) = sirohydrochlorin + Fe(2+). It participates in cofactor biosynthesis; adenosylcobalamin biosynthesis; precorrin-2 from uroporphyrinogen III: step 1/1. Its pathway is cofactor biosynthesis; adenosylcobalamin biosynthesis; sirohydrochlorin from precorrin-2: step 1/1. The protein operates within porphyrin-containing compound metabolism; siroheme biosynthesis; precorrin-2 from uroporphyrinogen III: step 1/1. It functions in the pathway porphyrin-containing compound metabolism; siroheme biosynthesis; siroheme from sirohydrochlorin: step 1/1. It participates in porphyrin-containing compound metabolism; siroheme biosynthesis; sirohydrochlorin from precorrin-2: step 1/1. Multifunctional enzyme that catalyzes the SAM-dependent methylations of uroporphyrinogen III at position C-2 and C-7 to form precorrin-2 via precorrin-1. Then it catalyzes the NAD-dependent ring dehydrogenation of precorrin-2 to yield sirohydrochlorin. Finally, it catalyzes the ferrochelation of sirohydrochlorin to yield siroheme. The protein is Siroheme synthase of Shigella boydii serotype 18 (strain CDC 3083-94 / BS512).